Consider the following 424-residue polypeptide: Serine--tRNA ligase (424 aa).

Residues 109 to 129 (QEDVPYGESEEDNREERKWGD) form a disordered region. Position 231–233 (231–233 (TAE)) interacts with L-serine. 262–264 (RSE) serves as a coordination point for ATP. Glutamate 285 contacts L-serine. An ATP-binding site is contributed by 349–352 (EISS). Position 385 (serine 385) interacts with L-serine.

This sequence belongs to the class-II aminoacyl-tRNA synthetase family. Type-1 seryl-tRNA synthetase subfamily. Homodimer. The tRNA molecule binds across the dimer.

The protein localises to the cytoplasm. The catalysed reaction is tRNA(Ser) + L-serine + ATP = L-seryl-tRNA(Ser) + AMP + diphosphate + H(+). It catalyses the reaction tRNA(Sec) + L-serine + ATP = L-seryl-tRNA(Sec) + AMP + diphosphate + H(+). The protein operates within aminoacyl-tRNA biosynthesis; selenocysteinyl-tRNA(Sec) biosynthesis; L-seryl-tRNA(Sec) from L-serine and tRNA(Sec): step 1/1. Catalyzes the attachment of serine to tRNA(Ser). Is also able to aminoacylate tRNA(Sec) with serine, to form the misacylated tRNA L-seryl-tRNA(Sec), which will be further converted into selenocysteinyl-tRNA(Sec). The polypeptide is Serine--tRNA ligase (Shouchella clausii (strain KSM-K16) (Alkalihalobacillus clausii)).